Reading from the N-terminus, the 391-residue chain is Succinate--CoA ligase [ADP-forming] subunit beta (391 aa).

Residues 9 to 246 (KHLFADYDIP…ITQEDEAEVQ (238 aa)) enclose the ATP-grasp domain. Residues Lys-46, 53–55 (GRG), Glu-99, Leu-102, and Glu-107 each bind ATP. Mg(2+) is bound by residues Asn-199 and Asp-213. Substrate-binding positions include Asn-266 and 323–325 (GIV).

Belongs to the succinate/malate CoA ligase beta subunit family. Heterotetramer of two alpha and two beta subunits. Mg(2+) serves as cofactor.

It catalyses the reaction succinate + ATP + CoA = succinyl-CoA + ADP + phosphate. The enzyme catalyses GTP + succinate + CoA = succinyl-CoA + GDP + phosphate. The protein operates within carbohydrate metabolism; tricarboxylic acid cycle; succinate from succinyl-CoA (ligase route): step 1/1. Functionally, succinyl-CoA synthetase functions in the citric acid cycle (TCA), coupling the hydrolysis of succinyl-CoA to the synthesis of either ATP or GTP and thus represents the only step of substrate-level phosphorylation in the TCA. The beta subunit provides nucleotide specificity of the enzyme and binds the substrate succinate, while the binding sites for coenzyme A and phosphate are found in the alpha subunit. This is Succinate--CoA ligase [ADP-forming] subunit beta from Alkalilimnicola ehrlichii (strain ATCC BAA-1101 / DSM 17681 / MLHE-1).